Here is a 301-residue protein sequence, read N- to C-terminus: HTH-type transcriptional activator NagR (301 aa).

The HTH lysR-type domain maps to 6–63 (IDLNLLVVFNQLLLDRSVSTAGEKLGLTQPAVSNSLKRLRAALKDDLFLRTSKGMEPT). Residues 23–42 (VSTAGEKLGLTQPAVSNSLK) constitute a DNA-binding region (H-T-H motif).

This sequence belongs to the LysR transcriptional regulatory family.

May regulate the expression of the naphthalene (nagA-F) and salicylate (nagG-M) metabolism genes. The protein is HTH-type transcriptional activator NagR of Ralstonia sp.